A 172-amino-acid polypeptide reads, in one-letter code: Large ribosomal subunit protein uL10 (172 aa).

This sequence belongs to the universal ribosomal protein uL10 family. Part of the ribosomal stalk of the 50S ribosomal subunit. The N-terminus interacts with L11 and the large rRNA to form the base of the stalk. The C-terminus forms an elongated spine to which L12 dimers bind in a sequential fashion forming a multimeric L10(L12)X complex.

Its function is as follows. Forms part of the ribosomal stalk, playing a central role in the interaction of the ribosome with GTP-bound translation factors. The chain is Large ribosomal subunit protein uL10 from Brucella anthropi (strain ATCC 49188 / DSM 6882 / CCUG 24695 / JCM 21032 / LMG 3331 / NBRC 15819 / NCTC 12168 / Alc 37) (Ochrobactrum anthropi).